Consider the following 180-residue polypeptide: MNNTISELAASIRSIPDYPKPGIIFRDITTLLGNPRAFRRAVDELVQPYAGTKIDKIAGMEARGFILGGAVAHQLSSGFVPIRKKGKLPHETVRIAYSLEYGVDEMEMHRDAVQPGEKVILVDDLIATGGTAVGATRLLRQIGAEVVGACFVIDLPDLGGRRKLEELGVVVHTLVEFSGH.

It belongs to the purine/pyrimidine phosphoribosyltransferase family. In terms of assembly, homodimer.

It localises to the cytoplasm. It carries out the reaction AMP + diphosphate = 5-phospho-alpha-D-ribose 1-diphosphate + adenine. It functions in the pathway purine metabolism; AMP biosynthesis via salvage pathway; AMP from adenine: step 1/1. Its function is as follows. Catalyzes a salvage reaction resulting in the formation of AMP, that is energically less costly than de novo synthesis. This chain is Adenine phosphoribosyltransferase, found in Rhizobium johnstonii (strain DSM 114642 / LMG 32736 / 3841) (Rhizobium leguminosarum bv. viciae).